The chain runs to 205 residues: MIQGIIGKKIGMTQIFQEDGKAQPVTLVEAGPCVVVQVKTEKQDGYEAVQLGYGKAKHITSAVKGQCRGFGEFKVLREVDVDDIAAVNVGDQITVSDFKDGEKIDASGVSRGRGFAGVVKRWHFAGGPKTHGQSDRHRAPGSISSTTTPGRIYKGKRMAGHMGNDAVTIRNLVVLKTDAEKNLLMVKGAIPGGKNTIILIKKTGK.

The tract at residues 126–150 (GGPKTHGQSDRHRAPGSISSTTTPG) is disordered.

This sequence belongs to the universal ribosomal protein uL3 family. Part of the 50S ribosomal subunit. Forms a cluster with proteins L14 and L19.

In terms of biological role, one of the primary rRNA binding proteins, it binds directly near the 3'-end of the 23S rRNA, where it nucleates assembly of the 50S subunit. This Dehalococcoides mccartyi (strain ATCC BAA-2266 / KCTC 15142 / 195) (Dehalococcoides ethenogenes (strain 195)) protein is Large ribosomal subunit protein uL3.